Here is a 246-residue protein sequence, read N- to C-terminus: 1-(5-phosphoribosyl)-5-[(5-phosphoribosylamino)methylideneamino] imidazole-4-carboxamide isomerase (246 aa).

The active-site Proton acceptor is Asp-8. Asp-131 acts as the Proton donor in catalysis.

Belongs to the HisA/HisF family.

It localises to the cytoplasm. The catalysed reaction is 1-(5-phospho-beta-D-ribosyl)-5-[(5-phospho-beta-D-ribosylamino)methylideneamino]imidazole-4-carboxamide = 5-[(5-phospho-1-deoxy-D-ribulos-1-ylimino)methylamino]-1-(5-phospho-beta-D-ribosyl)imidazole-4-carboxamide. It participates in amino-acid biosynthesis; L-histidine biosynthesis; L-histidine from 5-phospho-alpha-D-ribose 1-diphosphate: step 4/9. In Bordetella petrii (strain ATCC BAA-461 / DSM 12804 / CCUG 43448), this protein is 1-(5-phosphoribosyl)-5-[(5-phosphoribosylamino)methylideneamino] imidazole-4-carboxamide isomerase.